Reading from the N-terminus, the 703-residue chain is DNA ligase (703 aa).

NAD(+) is bound by residues 44–48 (DAEYD), 93–94 (SL), and E127. K129 serves as the catalytic N6-AMP-lysine intermediate. R150, E186, K302, and K326 together coordinate NAD(+). Zn(2+)-binding residues include C420, C422, C444, and C450. Positions 625–703 (VADSPVAGKT…EDMWFQRIGA (79 aa)) constitute a BRCT domain.

This sequence belongs to the NAD-dependent DNA ligase family. LigA subfamily. Mg(2+) is required as a cofactor. Requires Mn(2+) as cofactor.

It catalyses the reaction NAD(+) + (deoxyribonucleotide)n-3'-hydroxyl + 5'-phospho-(deoxyribonucleotide)m = (deoxyribonucleotide)n+m + AMP + beta-nicotinamide D-nucleotide.. Functionally, DNA ligase that catalyzes the formation of phosphodiester linkages between 5'-phosphoryl and 3'-hydroxyl groups in double-stranded DNA using NAD as a coenzyme and as the energy source for the reaction. It is essential for DNA replication and repair of damaged DNA. The protein is DNA ligase of Chelativorans sp. (strain BNC1).